The sequence spans 102 residues: uncharacterized protein (102 aa).

Positions Met1–Ala22 are cleaved as a signal peptide. Cys23 carries N-palmitoyl cysteine lipidation. The S-diacylglycerol cysteine moiety is linked to residue Cys23.

The protein belongs to the MG185/MG260 family.

It is found in the cell membrane. This is an uncharacterized protein from Mycoplasma pneumoniae (strain ATCC 29342 / M129 / Subtype 1) (Mycoplasmoides pneumoniae).